Consider the following 594-residue polypeptide: Potassium-transporting ATPase potassium-binding subunit (594 aa).

10 consecutive transmembrane segments (helical) span residues A3–L23, A67–L87, A136–V156, L179–V199, L287–V307, V314–F334, G415–G435, V453–L473, V519–L539, and L562–A582.

It belongs to the KdpA family. As to quaternary structure, the system is composed of three essential subunits: KdpA, KdpB and KdpC.

It is found in the cell inner membrane. In terms of biological role, part of the high-affinity ATP-driven potassium transport (or Kdp) system, which catalyzes the hydrolysis of ATP coupled with the electrogenic transport of potassium into the cytoplasm. This subunit binds the periplasmic potassium ions and delivers the ions to the membrane domain of KdpB through an intramembrane tunnel. This Bordetella bronchiseptica (strain ATCC BAA-588 / NCTC 13252 / RB50) (Alcaligenes bronchisepticus) protein is Potassium-transporting ATPase potassium-binding subunit.